The primary structure comprises 99 residues: Mu-hexatoxin-Mg1c (99 aa).

Disulfide bonds link Cys-61–Cys-75, Cys-68–Cys-80, and Cys-74–Cys-94.

The protein belongs to the neurotoxin 14 (magi-1) family. 09 (magi-1) subfamily. Expressed by the venom gland.

The protein localises to the secreted. Inhibits voltage-gated sodium channels by binding to site 3. Insecticidal neurotoxin. This chain is Mu-hexatoxin-Mg1c, found in Macrothele gigas (Japanese funnel web spider).